The chain runs to 530 residues: Autoinducer-2 kinase (530 aa).

Belongs to the FGGY kinase family.

The protein localises to the cytoplasm. It catalyses the reaction (S)-4,5-dihydroxypentane-2,3-dione + ATP = (2S)-2-hydroxy-3,4-dioxopentyl phosphate + ADP + H(+). Its function is as follows. Catalyzes the phosphorylation of autoinducer-2 (AI-2) to phospho-AI-2, which subsequently inactivates the transcriptional regulator LsrR and leads to the transcription of the lsr operon. Phosphorylates the ring-open form of (S)-4,5-dihydroxypentane-2,3-dione (DPD), which is the precursor to all AI-2 signaling molecules, at the C5 position. The polypeptide is Autoinducer-2 kinase (Escherichia coli O9:H4 (strain HS)).